The following is a 263-amino-acid chain: Achaete-scute homolog 2 (263 aa).

Disordered regions lie at residues 104-126 (RRRR…RNER) and 194-248 (PPSD…ELSP). 3 stretches are compositionally biased toward low complexity: residues 110-121 (ATEASSSSAAVA), 202-220 (PSAS…SPSP), and 230-247 (SPRS…GELS). Positions 118 to 170 (AAVARRNERERNRVKLVNLGFQALRQHVPHGGANKKLSKVETLRSAVEYIRAL) constitute a bHLH domain.

In terms of assembly, efficient DNA binding requires dimerization with another basic helix-loop-helix (bHLH) protein. Forms heterodimers with bHLH transcription factor TCF3. May not heterodimerise with bHLH protein HAND1. As to expression, expressed in follicular T-helper (Tfh) cells.

Its subcellular location is the nucleus. Functionally, transcription factor. Binds to E-box motifs 5'-CANNTG-3' in the regulatory elements of target genes, probably as a heterodimer with another basic helix-loop-helix (bHLH) protein such as the transcription factor TCF3. May bind both open and closed chromatin, acting as a pioneer transcription factor to allow other factors to bind and activate lineage-specific genes. Required during post-implantation development for the generation of some differentiated trophoblast cell types. Transcriptional activity of ASCL2 may be antagonised in a subset of trophoblast cells by bHLH transcription factor HAND1, perhaps by competing for dimerization with other bHLH proteins. Involved in differentiation and function of follicular T-helper (Tfh) cells, thereby playing a role in germinal center responses; probably modulates expression of genes involved in Tfh cell function, such as BCL6. May also act as a suppressor of Th1-, Th2- and Th17-cell differentiation. Induces the formation of stem cells in intestinal crypts in vitro, synergistically activating transcription of target genes, such as SOX9, together with TCF4/beta-catenin. May form a bistable transcriptional switch, controlling expression of its own gene together with Wnt/R-spondin signaling, and thereby maintaining stem cell characteristics. Modulates expression of target genes, including perhaps down-regulating EGR1/Krox24 and chemokine CXCL10/Mob-1 and up-regulating CXCR4 and CDKN1C/p57kip2, in Schwann cells. May play a role in reducing proliferation of Schwann cells, perhaps acting via modulation of expression of CDKN1C. May be dispensable for blastocyst formation and later embryonic function. May be involved in the determination of neuronal precursors. The polypeptide is Achaete-scute homolog 2 (Ascl2) (Mus musculus (Mouse)).